The following is a 650-amino-acid chain: Chaperone protein HtpG (650 aa).

Residues 1 to 349 are a; substrate-binding; sequence MSKTVKKFET…SSDLPLNVSR (349 aa). The b stretch occupies residues 350-566; the sequence is EILQEDVQIK…EHGLNANMER (217 aa). Positions 567–650 are c; that stretch reads ILRAMNQTVP…VADGKAAAGE (84 aa).

This sequence belongs to the heat shock protein 90 family. Homodimer.

It localises to the cytoplasm. Functionally, molecular chaperone. Has ATPase activity. This is Chaperone protein HtpG from Geobacter sulfurreducens (strain ATCC 51573 / DSM 12127 / PCA).